A 968-amino-acid polypeptide reads, in one-letter code: RNA polymerase-associated protein RapA (968 aa).

The region spanning Asp164–Asn334 is the Helicase ATP-binding domain. Asp177–Thr184 lines the ATP pocket. The DEAH box motif lies at Asp280–His283. A Helicase C-terminal domain is found at Arg490 to Gly662.

This sequence belongs to the SNF2/RAD54 helicase family. RapA subfamily. As to quaternary structure, interacts with the RNAP. Has a higher affinity for the core RNAP than for the holoenzyme. Its ATPase activity is stimulated by binding to RNAP.

In terms of biological role, transcription regulator that activates transcription by stimulating RNA polymerase (RNAP) recycling in case of stress conditions such as supercoiled DNA or high salt concentrations. Probably acts by releasing the RNAP, when it is trapped or immobilized on tightly supercoiled DNA. Does not activate transcription on linear DNA. Probably not involved in DNA repair. This is RNA polymerase-associated protein RapA from Escherichia coli O127:H6 (strain E2348/69 / EPEC).